A 339-amino-acid polypeptide reads, in one-letter code: Cullin-associated NEDD8-dissociated protein 1, N-terminal part (339 aa).

2 HEAT repeats span residues 5–42 (HTIQ…NPCS) and 50–87 (ASAT…RLPL).

In terms of assembly, interacts with candA-C. Interacts with unneddylated cullins culA and culD; interaction occurs only when complexed with candA-C.

It localises to the nucleus. In terms of biological role, assembly factor of SCF (SKP1-CUL1-F-box protein) E3 ubiquitin ligase complexes that promotes the exchange of the substrate-recognition F-box subunit in SCF complexes, thereby playing a key role in the cellular repertoire of SCF complexes. Acts as a F-box protein exchange factor when interacting with candA-C. The sequence is that of Cullin-associated NEDD8-dissociated protein 1, N-terminal part (candA-N) from Emericella nidulans (strain FGSC A4 / ATCC 38163 / CBS 112.46 / NRRL 194 / M139) (Aspergillus nidulans).